We begin with the raw amino-acid sequence, 432 residues long: Histidinol dehydrogenase (432 aa).

NAD(+) is bound by residues Tyr130, Gln191, and Asn214. Substrate contacts are provided by Ser237, Gln259, and His262. Residues Gln259 and His262 each coordinate Zn(2+). Residues Glu327 and His328 each act as proton acceptor in the active site. Substrate-binding residues include His328, Asp361, Glu415, and His420. Asp361 contacts Zn(2+). His420 contacts Zn(2+).

The protein belongs to the histidinol dehydrogenase family. Zn(2+) serves as cofactor.

The enzyme catalyses L-histidinol + 2 NAD(+) + H2O = L-histidine + 2 NADH + 3 H(+). The protein operates within amino-acid biosynthesis; L-histidine biosynthesis; L-histidine from 5-phospho-alpha-D-ribose 1-diphosphate: step 9/9. Functionally, catalyzes the sequential NAD-dependent oxidations of L-histidinol to L-histidinaldehyde and then to L-histidine. This is Histidinol dehydrogenase from Agrobacterium fabrum (strain C58 / ATCC 33970) (Agrobacterium tumefaciens (strain C58)).